The chain runs to 247 residues: ATP synthase subunit a, chloroplastic (247 aa).

5 consecutive transmembrane segments (helical) span residues 38 to 58 (QVLITSWVVIAILLISTILVV), 95 to 115 (VPFIGTLFLFIFVSNWSGALL), 134 to 154 (INTTVALALLTSVAYFYAGIS), 199 to 219 (LVVVVLVSLVPLVIPIPVMFL), and 220 to 240 (GLFTSGIQALIFATLAAAYIG).

This sequence belongs to the ATPase A chain family. F-type ATPases have 2 components, CF(1) - the catalytic core - and CF(0) - the membrane proton channel. CF(1) has five subunits: alpha(3), beta(3), gamma(1), delta(1), epsilon(1). CF(0) has four main subunits: a, b, b' and c.

The protein localises to the plastid. The protein resides in the chloroplast thylakoid membrane. Key component of the proton channel; it plays a direct role in the translocation of protons across the membrane. This chain is ATP synthase subunit a, chloroplastic, found in Cicer arietinum (Chickpea).